A 154-amino-acid chain; its full sequence is Ribonuclease H (154 aa).

The region spanning 7 to 148 (KPETVEIYTD…ADALAREGIA (142 aa)) is the RNase H type-1 domain. Residues Asp16, Glu54, Asp76, and Asp140 each contribute to the Mg(2+) site.

This sequence belongs to the RNase H family. Monomer. Mg(2+) serves as cofactor.

The protein localises to the cytoplasm. It carries out the reaction Endonucleolytic cleavage to 5'-phosphomonoester.. In terms of biological role, endonuclease that specifically degrades the RNA of RNA-DNA hybrids. This Paramagnetospirillum magneticum (strain ATCC 700264 / AMB-1) (Magnetospirillum magneticum) protein is Ribonuclease H.